A 696-amino-acid polypeptide reads, in one-letter code: D-(-)-3-hydroxybutyrate oligomer hydrolase (696 aa).

The first 26 residues, 1–26 (MDTHGWGSRILVGAALAALTMLGACN), serve as a signal peptide directing secretion. Serine 309 acts as the Charge relay system in catalysis.

The protein belongs to the D-(-)-3-hydroxybutyrate oligomer hydrolase family.

It localises to the secreted. The enzyme catalyses (3R)-hydroxybutanoate dimer + H2O = 2 (R)-3-hydroxybutanoate + H(+). The protein operates within lipid metabolism; butanoate metabolism. Its function is as follows. Participates in the degradation of poly-3-hydroxybutyrate (PHB). It works downstream of poly(3-hydroxybutyrate) depolymerase, hydrolyzing D(-)-3-hydroxybutyrate oligomers of various length (3HB-oligomers) into 3HB-monomers. The sequence is that of D-(-)-3-hydroxybutyrate oligomer hydrolase from Burkholderia vietnamiensis (strain G4 / LMG 22486) (Burkholderia cepacia (strain R1808)).